We begin with the raw amino-acid sequence, 350 residues long: uncharacterized protein (350 aa).

Residues Lys197 to Ser212 are compositionally biased toward basic and acidic residues. A disordered region spans residues Lys197–Val217.

Its subcellular location is the plastid. The protein resides in the chloroplast. This is an uncharacterized protein from Euglena gracilis.